The sequence spans 296 residues: Polyadenylate-binding protein 2 (296 aa).

Residues 1–102 (MAAVSSAASL…EEEPGELTGD (102 aa)) are disordered. 2 stretches are compositionally biased toward gly residues: residues 19–31 (LRGG…GGQD) and 71–82 (GRGGSGGGGAGG). The segment covering 84–97 (EELEDEELEEEEPG) has biased composition (acidic residues). The stretch at 107–141 (DPELEAIKARVREMEEEAEKLKELQNEVEKQMNMS) forms a coiled coil. The segment at 146–296 (NAGPVIMSIE…ARVTSWYTPY (151 aa)) is necessary for homooligomerization. In terms of domain architecture, RRM spans 163-240 (RSIYVGNVDY…RQIKVVPKRT (78 aa)).

Monomer and homooligomer. Binds RNA as a monomer and oligomerizes when bound to poly(A).

It is found in the nucleus. Its subcellular location is the cytoplasm. Its function is as follows. Involved in the 3'-end formation of mRNA precursors (pre-mRNA) by the addition of a poly(A) tail of 200-250 nt to the upstream cleavage product. Stimulates poly(A) polymerase (PAPOLA) conferring processivity on the poly(A) tail elongation reaction and also controls the poly(A) tail length. Increases the affinity of poly(A) polymerase for RNA. Binds to poly(A) and to poly(G) with high affinity. May protect the poly(A) tail from degradation. The sequence is that of Polyadenylate-binding protein 2 from Xenopus tropicalis (Western clawed frog).